A 281-amino-acid polypeptide reads, in one-letter code: Ribosomal RNA small subunit methyltransferase A (281 aa).

Residues asparagine 36, leucine 38, glycine 63, glutamate 84, aspartate 109, and asparagine 127 each contribute to the S-adenosyl-L-methionine site.

The protein belongs to the class I-like SAM-binding methyltransferase superfamily. rRNA adenine N(6)-methyltransferase family. RsmA subfamily.

It localises to the cytoplasm. It catalyses the reaction adenosine(1518)/adenosine(1519) in 16S rRNA + 4 S-adenosyl-L-methionine = N(6)-dimethyladenosine(1518)/N(6)-dimethyladenosine(1519) in 16S rRNA + 4 S-adenosyl-L-homocysteine + 4 H(+). In terms of biological role, specifically dimethylates two adjacent adenosines (A1518 and A1519) in the loop of a conserved hairpin near the 3'-end of 16S rRNA in the 30S particle. May play a critical role in biogenesis of 30S subunits. This Borrelia garinii subsp. bavariensis (strain ATCC BAA-2496 / DSM 23469 / PBi) (Borreliella bavariensis) protein is Ribosomal RNA small subunit methyltransferase A.